Here is a 128-residue protein sequence, read N- to C-terminus: 3-aminoacrylate deaminase RutC (128 aa).

It belongs to the RutC family.

The enzyme catalyses (Z)-3-aminoacrylate + H2O + H(+) = 3-oxopropanoate + NH4(+). Functionally, involved in pyrimidine catabolism. Catalyzes the deamination of 3-aminoacrylate to malonic semialdehyde, a reaction that can also occur spontaneously. RutC may facilitate the reaction and modulate the metabolic fitness, rather than catalyzing essential functions. In Serratia proteamaculans (strain 568), this protein is 3-aminoacrylate deaminase RutC.